The following is a 373-amino-acid chain: RNA cytidine acetyltransferase (373 aa).

Arg-53 lines the ATP pocket. Residues 216–218 (IAT) and 223–229 (TGMGYGS) contribute to the acetyl-CoA site. A disordered region spans residues 246-271 (GEFEEENEAAKPADEESDDESNLLKE). Residue Arg-313 coordinates acetyl-CoA.

It belongs to the RNA cytidine acetyltransferase family. NAT10 subfamily.

The protein localises to the nucleus. It is found in the nucleolus. It catalyses the reaction a cytidine in 18S rRNA + acetyl-CoA + ATP + H2O = an N(4)-acetylcytidine in 18S rRNA + ADP + phosphate + CoA + H(+). The catalysed reaction is a cytidine in tRNA + acetyl-CoA + ATP + H2O = an N(4)-acetylcytidine in tRNA + ADP + phosphate + CoA + H(+). RNA cytidine acetyltransferase with specificity toward both 18S rRNA and tRNAs. Catalyzes the formation of N(4)-acetylcytidine (ac4C) in 18S rRNA. Required for early nucleolar cleavages of precursor rRNA at sites A0, A1 and A2 during 18S rRNA synthesis. Catalyzes the formation of ac4C in serine and leucine tRNAs. Requires a tRNA-binding adapter protein for full tRNA acetyltransferase activity but not for 18S rRNA acetylation. The protein is RNA cytidine acetyltransferase of Achlya ambisexualis (Water mold).